A 475-amino-acid chain; its full sequence is MTTLPPLPMTRPKLTALARQKLPCSSRKIPRSQLIKEKDDIDHYLEVNFKGLSKEEVAAYRNSYKKNICVDMLRDGYHKSFTELFALMEQWDALREAARVRSLFWLQKPLEEQPDKLDYFYHYLTRAEDAERKKSFEDVYNNLYALACYFNNPEDKWVRNHFYERCFKIAQLIKIDGGKKEAEAHMHMGLLYEEDGQLLEAAEHYEAFHQLTQGRIWKDETGRSLNLLACESLLRTYRLLSDKMLQNKEYKQAIKILIKASEIAKEGSDKKMEGEASYYLGLAHLAAEEYETALTVLDTYCKISTELDDDLSLGRAYEAIAKVLQSQGNTTEAIKYLKKFVKIARNNFQSLDFVRASTMLGDIYNEKGHYNKASQRFQQAFDTTVELMSMPLMDETKVHYGIAKAHQMMLTVNNYIESADLTSLNYLLSWKESRGDIEPDPVTEEFRGSTVETVSQNSEHLEELSRFPGDQKNET.

7 TPR repeats span residues 92-131, 136-173, 182-215, 234-267, 274-307, 314-347, and 354-387; these read DALR…EDAE, FEDV…AQLI, AEAH…TQGR, LRTY…AKEG, GEAS…STEL, GRAY…ARNN, and VRAS…TVEL. The interval 436-475 is disordered; that stretch reads DIEPDPVTEEFRGSTVETVSQNSEHLEELSRFPGDQKNET. Over residues 459-475 the composition is skewed to basic and acidic residues; sequence EHLEELSRFPGDQKNET.

It is found in the cytoplasm. The protein resides in the cytoskeleton. Its subcellular location is the flagellum axoneme. Its function is as follows. Axonemal protein which is implicated in axonemal and/or peri-axonemal structure assembly and regulates flagellum assembly and beating and therefore sperm motility. The chain is Tetratricopeptide repeat protein 29 (TTC29) from Macaca fascicularis (Crab-eating macaque).